The sequence spans 331 residues: UDP-GalNAc:beta-1,3-N-acetylgalactosaminyltransferase 1 (331 aa).

Residues 1-20 (MASALWTVLPSRMSLRSLQW) are Cytoplasmic-facing. A helical; Signal-anchor for type II membrane protein membrane pass occupies residues 21 to 43 (SLLLLSLLSFLVMWYLSLPHYNV). Topologically, residues 44–331 (IERVNWMYFY…VMLRNTTCHY (288 aa)) are lumenal. Residues asparagine 72, asparagine 154, asparagine 198, asparagine 212, and asparagine 326 are each glycosylated (N-linked (GlcNAc...) asparagine).

It belongs to the glycosyltransferase 31 family. The cofactor is Mg(2+).

It localises to the golgi apparatus membrane. It carries out the reaction a globoside Gb3Cer (d18:1(4E)) + UDP-N-acetyl-alpha-D-galactosamine = a globoside Gb4Cer (d18:1(4E)) + UDP + H(+). The protein operates within protein modification; protein glycosylation. Functionally, transfers N-acetylgalactosamine onto globotriaosylceramide. Plays a critical role in preimplantation stage embryonic development. The chain is UDP-GalNAc:beta-1,3-N-acetylgalactosaminyltransferase 1 (B3GALNT1) from Pongo abelii (Sumatran orangutan).